An 823-amino-acid polypeptide reads, in one-letter code: Putative E3 ubiquitin-protein ligase RF4 (823 aa).

Disordered regions lie at residues 24–72, 224–291, and 432–464; these read TVSP…NGSV, SKLS…CSGS, and ESVTLIPSASEKKSDSSIPSTSEKKSGSESEEK. The span at 61-72 shows a compositional bias: polar residues; it reads KPQNHLSGNGSV. A compositionally biased stretch (low complexity) spans 224 to 240; it reads SKLSDSESLGAESNPPK. Residues 267–282 are compositionally biased toward polar residues; that stretch reads FPNTPNSKKTQSSGTT. Residues 453–464 are compositionally biased toward basic and acidic residues; sequence SEKKSGSESEEK. Positions 536–738 form a coiled coil; it reads ELKALRKERE…ELKLKSDYSR (203 aa). The RING-type zinc finger occupies 768-808; sequence CVMCLSEEMSVIFLPCAHQVLCFKCNQLHEKEGMMDCPSCR.

The protein belongs to the RING-type zinc finger family.

The catalysed reaction is S-ubiquitinyl-[E2 ubiquitin-conjugating enzyme]-L-cysteine + [acceptor protein]-L-lysine = [E2 ubiquitin-conjugating enzyme]-L-cysteine + N(6)-ubiquitinyl-[acceptor protein]-L-lysine.. The protein operates within protein modification; protein ubiquitination. The polypeptide is Putative E3 ubiquitin-protein ligase RF4 (RF4) (Arabidopsis thaliana (Mouse-ear cress)).